The sequence spans 134 residues: Putative pre-16S rRNA nuclease (134 aa).

The protein belongs to the YqgF nuclease family.

Its subcellular location is the cytoplasm. In terms of biological role, could be a nuclease involved in processing of the 5'-end of pre-16S rRNA. This is Putative pre-16S rRNA nuclease from Helicobacter pylori (strain Shi470).